A 500-amino-acid polypeptide reads, in one-letter code: Glutathione reductase (500 aa).

Positions 12 and 13 each coordinate FAD. Position 12 (S12) interacts with glutathione. Position 19 (R19) interacts with glutathione. FAD is bound by residues E32, T39, C40, and K48. The cysteines at positions 40 and 45 are disulfide-linked. Y95 serves as a coordination point for glutathione. Residue A111 participates in FAD binding. I187, E190, R207, R213, and G272 together coordinate NADP(+). Positions 312 and 354 each coordinate FAD. Residue R362 coordinates glutathione. An NADP(+)-binding site is contributed by V384. FAD is bound at residue H485. H485 acts as the Proton acceptor in catalysis.

It belongs to the class-I pyridine nucleotide-disulfide oxidoreductase family. Homodimer. Requires FAD as cofactor.

It is found in the cytoplasm. The catalysed reaction is 2 glutathione + NADP(+) = glutathione disulfide + NADPH + H(+). Catalyzes the reduction of glutathione disulfide (GSSG) to reduced glutathione (GSH). Constitutes the major mechanism to maintain a high GSH:GSSG ratio in the cytosol. In Plasmodium falciparum (isolate K1 / Thailand), this protein is Glutathione reductase.